The sequence spans 456 residues: DnaJ homolog dnj-10 (456 aa).

The J domain occupies 44–108 (DYYKTLGVDK…TKRQEYDAYG (65 aa)). The segment at 178-257 (GATKNVSVNV…CEGEGQTVQR (80 aa)) adopts a CR-type zinc-finger fold. CXXCXGXG motif repeat units follow at residues 208 to 215 (CPYCNGTG), 231 to 238 (CNRCRGSG), and 245 to 252 (CQECEGEG). Residues 395–429 (KGLEKNQKTEEKETKKNEEKKSEGASESQKRRSEP) are compositionally biased toward basic and acidic residues. Positions 395 to 443 (KGLEKNQKTEEKETKKNEEKKSEGASESQKRRSEPVAENAETIDENQEN) are disordered.

This Caenorhabditis elegans protein is DnaJ homolog dnj-10 (dnj-10).